The primary structure comprises 300 residues: Inosose dehydratase (300 aa).

Belongs to the IolE/MocC family. The cofactor is glutathione. Requires Co(2+) as cofactor. Mn(2+) serves as cofactor.

The catalysed reaction is scyllo-inosose = 3D-3,5/4-trihydroxycyclohexane-1,2-dione + H2O. Its pathway is polyol metabolism; myo-inositol degradation into acetyl-CoA; acetyl-CoA from myo-inositol: step 2/7. Functionally, catalyzes the dehydration of inosose (2-keto-myo-inositol, 2KMI or 2,4,6/3,5-pentahydroxycyclohexanone) to 3D-(3,5/4)-trihydroxycyclohexane-1,2-dione (D-2,3-diketo-4-deoxy-epi-inositol). The chain is Inosose dehydratase from Lactiplantibacillus plantarum (strain ATCC BAA-793 / NCIMB 8826 / WCFS1) (Lactobacillus plantarum).